Here is a 153-residue protein sequence, read N- to C-terminus: MALYEHVFLARQDMSAQQVDALVEQYKGVIEANGGKVGRVENWGLKSLTYRINKNRKAHYALMDIDAPAAAVHEVERQMRINEDVLRYMTIAVEAHEEGPSAMMQKRDRDDRPRRDGDRPDRGDRGDRGDRGPREGGRESFGDRPRRPREDRA.

A disordered region spans residues 94–153 (EAHEEGPSAMMQKRDRDDRPRRDGDRPDRGDRGDRGDRGPREGGRESFGDRPRRPREDRA).

The protein belongs to the bacterial ribosomal protein bS6 family.

Binds together with bS18 to 16S ribosomal RNA. This chain is Small ribosomal subunit protein bS6, found in Allorhizobium ampelinum (strain ATCC BAA-846 / DSM 112012 / S4) (Agrobacterium vitis (strain S4)).